The sequence spans 324 residues: tRNA U34 carboxymethyltransferase (324 aa).

Carboxy-S-adenosyl-L-methionine is bound by residues Lys-92, Trp-106, Lys-111, Gly-131, 153 to 155 (DPT), 181 to 182 (IE), Met-197, Tyr-201, and Arg-316.

Belongs to the class I-like SAM-binding methyltransferase superfamily. CmoB family. As to quaternary structure, homotetramer.

The catalysed reaction is carboxy-S-adenosyl-L-methionine + 5-hydroxyuridine(34) in tRNA = 5-carboxymethoxyuridine(34) in tRNA + S-adenosyl-L-homocysteine + H(+). Its function is as follows. Catalyzes carboxymethyl transfer from carboxy-S-adenosyl-L-methionine (Cx-SAM) to 5-hydroxyuridine (ho5U) to form 5-carboxymethoxyuridine (cmo5U) at position 34 in tRNAs. This chain is tRNA U34 carboxymethyltransferase, found in Methylococcus capsulatus (strain ATCC 33009 / NCIMB 11132 / Bath).